Consider the following 581-residue polypeptide: Arginine--tRNA ligase (581 aa).

The 'HIGH' region signature appears at 126 to 136; that stretch reads PNLAKEMHVGH.

The protein belongs to the class-I aminoacyl-tRNA synthetase family. In terms of assembly, monomer.

It is found in the cytoplasm. The catalysed reaction is tRNA(Arg) + L-arginine + ATP = L-arginyl-tRNA(Arg) + AMP + diphosphate. In Shewanella halifaxensis (strain HAW-EB4), this protein is Arginine--tRNA ligase.